Consider the following 389-residue polypeptide: S-adenosylmethionine synthase (389 aa).

Residue His-15 coordinates ATP. Residue Asp-17 participates in Mg(2+) binding. Residue Glu-43 participates in K(+) binding. Glu-56 and Gln-99 together coordinate L-methionine. Residues 99–109 form a flexible loop region; the sequence is QSPDIAQGVNE. ATP-binding positions include 166–168, 234–235, Asp-243, 249–250, Ala-266, and Lys-270; these read DAK, RF, and RK. Asp-243 serves as a coordination point for L-methionine. Position 274 (Lys-274) interacts with L-methionine.

Belongs to the AdoMet synthase family. Homotetramer; dimer of dimers. It depends on Mg(2+) as a cofactor. K(+) is required as a cofactor.

It is found in the cytoplasm. The catalysed reaction is L-methionine + ATP + H2O = S-adenosyl-L-methionine + phosphate + diphosphate. The protein operates within amino-acid biosynthesis; S-adenosyl-L-methionine biosynthesis; S-adenosyl-L-methionine from L-methionine: step 1/1. Catalyzes the formation of S-adenosylmethionine (AdoMet) from methionine and ATP. The overall synthetic reaction is composed of two sequential steps, AdoMet formation and the subsequent tripolyphosphate hydrolysis which occurs prior to release of AdoMet from the enzyme. This is S-adenosylmethionine synthase from Neisseria meningitidis serogroup C (strain 053442).